Here is a 446-residue protein sequence, read N- to C-terminus: Glutamyl-tRNA(Gln) amidotransferase subunit D (446 aa).

The Asparaginase/glutaminase domain occupies 90–421 (SEVMIISTGG…DRIKEIMLTN (332 aa)). Catalysis depends on residues Thr100, Thr176, Asp177, and Lys255.

It belongs to the asparaginase 1 family. GatD subfamily. Heterodimer of GatD and GatE.

It carries out the reaction L-glutamyl-tRNA(Gln) + L-glutamine + ATP + H2O = L-glutaminyl-tRNA(Gln) + L-glutamate + ADP + phosphate + H(+). Its function is as follows. Allows the formation of correctly charged Gln-tRNA(Gln) through the transamidation of misacylated Glu-tRNA(Gln) in organisms which lack glutaminyl-tRNA synthetase. The reaction takes place in the presence of glutamine and ATP through an activated gamma-phospho-Glu-tRNA(Gln). The GatDE system is specific for glutamate and does not act on aspartate. This chain is Glutamyl-tRNA(Gln) amidotransferase subunit D, found in Sulfolobus acidocaldarius (strain ATCC 33909 / DSM 639 / JCM 8929 / NBRC 15157 / NCIMB 11770).